We begin with the raw amino-acid sequence, 177 residues long: Olfactory protein (177 aa).

An N-terminal signal peptide occupies residues 1–17; sequence MIRIIAIVVLFFLQCQA. Cys-81 and Cys-174 form a disulfide bridge.

Belongs to the calycin superfamily. Lipocalin family. Synthesized in Bowman glands, which secrete the mucus that bathes the cilia of the olfactory neuroepithelium.

The protein resides in the secreted. This Lithobates pipiens (Northern leopard frog) protein is Olfactory protein.